A 169-amino-acid chain; its full sequence is Peptide methionine sulfoxide reductase MsrA (169 aa).

Cysteine 10 is an active-site residue.

Belongs to the MsrA Met sulfoxide reductase family.

It catalyses the reaction L-methionyl-[protein] + [thioredoxin]-disulfide + H2O = L-methionyl-(S)-S-oxide-[protein] + [thioredoxin]-dithiol. It carries out the reaction [thioredoxin]-disulfide + L-methionine + H2O = L-methionine (S)-S-oxide + [thioredoxin]-dithiol. Its function is as follows. Has an important function as a repair enzyme for proteins that have been inactivated by oxidation. Catalyzes the reversible oxidation-reduction of methionine sulfoxide in proteins to methionine. The chain is Peptide methionine sulfoxide reductase MsrA from Streptococcus agalactiae serotype III (strain NEM316).